A 459-amino-acid polypeptide reads, in one-letter code: Argininosuccinate lyase (459 aa).

Belongs to the lyase 1 family. Argininosuccinate lyase subfamily.

Its subcellular location is the cytoplasm. It catalyses the reaction 2-(N(omega)-L-arginino)succinate = fumarate + L-arginine. The protein operates within amino-acid biosynthesis; L-arginine biosynthesis; L-arginine from L-ornithine and carbamoyl phosphate: step 3/3. This chain is Argininosuccinate lyase, found in Desulforudis audaxviator (strain MP104C).